A 153-amino-acid polypeptide reads, in one-letter code: Endoribonuclease YbeY (153 aa).

Zn(2+) contacts are provided by His116, His120, and His126.

This sequence belongs to the endoribonuclease YbeY family. Zn(2+) is required as a cofactor.

The protein resides in the cytoplasm. In terms of biological role, single strand-specific metallo-endoribonuclease involved in late-stage 70S ribosome quality control and in maturation of the 3' terminus of the 16S rRNA. This is Endoribonuclease YbeY from Clavibacter michiganensis subsp. michiganensis (strain NCPPB 382).